Here is a 608-residue protein sequence, read N- to C-terminus: Threonine--tRNA ligase (608 aa).

An editing domain region spans residues 1 to 145 (MKTLLIHAKH…TIKPGRRVRP (145 aa)). Catalytic stretches follow at residues 192–489 (PKYL…PSLP) and 193–489 (KYLE…PSLP). Residues Cys286, His337, and His458 each contribute to the Zn(2+) site.

This sequence belongs to the class-II aminoacyl-tRNA synthetase family. Homodimer. Zn(2+) serves as cofactor.

The protein localises to the cytoplasm. The enzyme catalyses tRNA(Thr) + L-threonine + ATP = L-threonyl-tRNA(Thr) + AMP + diphosphate + H(+). In terms of biological role, catalyzes the attachment of threonine to tRNA(Thr) in a two-step reaction: L-threonine is first activated by ATP to form Thr-AMP and then transferred to the acceptor end of tRNA(Thr). Also edits incorrectly charged L-seryl-tRNA(Thr). The protein is Threonine--tRNA ligase of Thermofilum pendens (strain DSM 2475 / Hrk 5).